Here is a 404-residue protein sequence, read N- to C-terminus: tRNA pseudouridine(31) synthase (404 aa).

D168 is an active-site residue.

Belongs to the pseudouridine synthase RluA family.

The protein resides in the cytoplasm. The protein localises to the mitochondrion. It catalyses the reaction uridine(31) in tRNA = pseudouridine(31) in tRNA. Its function is as follows. Catalyzes the formation of pseudouridine at position 31 in the psi GC loop of tRNAS. This Saccharomyces cerevisiae (strain ATCC 204508 / S288c) (Baker's yeast) protein is tRNA pseudouridine(31) synthase (PUS6).